A 170-amino-acid chain; its full sequence is Glycine cleavage system H protein, mitochondrial (170 aa).

A mitochondrion-targeting transit peptide spans 1 to 45 (MSLRVVRSVRAVACSLRIALASCPPRPWAPSAAAVRSLRTGSALL). One can recognise a Lipoyl-binding domain in the interval 63-145 (IGTVGISNFA…YEDGWLIKMT (83 aa)). At lysine 104 the chain carries N6-lipoyllysine.

Belongs to the GcvH family. As to quaternary structure, the glycine cleavage system is composed of four proteins: P (GLDC), T (GCST), L (DLD) and H (GCSH). Interacts with GLDC. The cofactor is (R)-lipoate.

Its subcellular location is the mitochondrion. The glycine cleavage system catalyzes the degradation of glycine. The H protein (GCSH) shuttles the methylamine group of glycine from the P protein (GLDC) to the T protein (GCST). Has a pivotal role in the lipoylation of enzymes involved in cellular energetics such as the mitochondrial dihydrolipoyllysine-residue acetyltransferase component of pyruvate dehydrogenase complex (DLAT), and the mitochondrial dihydrolipoyllysine-residue succinyltransferase component of 2-oxoglutarate dehydrogenase complex (DLST). The protein is Glycine cleavage system H protein, mitochondrial of Rattus norvegicus (Rat).